The chain runs to 1710 residues: Extracellular matrix protein A (1710 aa).

The N-terminal stretch at methionine 1–alanine 22 is a signal peptide. Cys-rich CT repeat units lie at residues asparagine 43 to glutamate 70, asparagine 71 to lysine 94, asparagine 95 to lysine 117, asparagine 118 to asparagine 141, asparagine 142 to asparagine 165, asparagine 166 to leucine 189, asparagine 190 to asparagine 213, asparagine 214 to asparagine 237, asparagine 238 to lysine 261, asparagine 262 to asparagine 285, asparagine 286 to asparagine 309, asparagine 310 to asparagine 333, asparagine 334 to asparagine 357, asparagine 358 to asparagine 381, asparagine 382 to lysine 405, lysine 406 to asparagine 429, asparagine 430 to asparagine 453, asparagine 454 to asparagine 477, asparagine 478 to asparagine 501, asparagine 502 to lysine 525, lysine 526 to asparagine 549, asparagine 550 to asparagine 573, asparagine 574 to asparagine 597, asparagine 598 to asparagine 621, asparagine 622 to serine 645, asparagine 646 to asparagine 669, asparagine 670 to asparagine 693, asparagine 694 to asparagine 717, asparagine 718 to lysine 741, lysine 742 to asparagine 765, asparagine 766 to asparagine 789, asparagine 790 to asparagine 813, asparagine 814 to asparagine 837, asparagine 838 to asparagine 861, asparagine 862 to serine 885, asparagine 886 to asparagine 909, asparagine 910 to asparagine 933, asparagine 934 to asparagine 957, asparagine 958 to asparagine 981, asparagine 982 to serine 1005, asparagine 1006 to asparagine 1029, asparagine 1030 to asparagine 1053, asparagine 1054 to asparagine 1077, asparagine 1078 to serine 1101, asparagine 1102 to asparagine 1125, asparagine 1126 to asparagine 1149, asparagine 1150 to asparagine 1173, asparagine 1174 to arginine 1197, asparagine 1198 to serine 1221, asparagine 1222 to asparagine 1245, asparagine 1246 to lysine 1269, asparagine 1270 to asparagine 1293, aspartate 1294 to asparagine 1317, asparagine 1318 to serine 1341, asparagine 1342 to asparagine 1365, asparagine 1366 to asparagine 1389, asparagine 1390 to asparagine 1413, asparagine 1414 to asparagine 1437, aspartate 1438 to asparagine 1461, asparagine 1462 to glycine 1485, asparagine 1486 to proline 1509, aspartate 1511 to aspartate 1534, asparagine 1558 to glycine 1581, asparagine 1582 to asparagine 1606, asparagine 1608 to aspartate 1632, and asparagine 1658 to serine 1682. 2 N-linked (GlcNAc...) asparagine glycosylation sites follow: asparagine 150 and asparagine 151. N-linked (GlcNAc...) asparagine glycosylation is found at asparagine 270 and asparagine 271. Asparagine 415 is a glycosylation site (N-linked (GlcNAc...) asparagine). A glycan (N-linked (GlcNAc...) asparagine) is linked at asparagine 535. N-linked (GlcNAc...) asparagine glycosylation occurs at asparagine 655. An N-linked (GlcNAc...) asparagine glycan is attached at asparagine 751. 3 N-linked (GlcNAc...) asparagine glycosylation sites follow: asparagine 871, asparagine 894, and asparagine 895. Asparagine 1015 carries N-linked (GlcNAc...) asparagine glycosylation. 2 N-linked (GlcNAc...) asparagine glycosylation sites follow: asparagine 1110 and asparagine 1111. Asparagine 1183 carries an N-linked (GlcNAc...) asparagine glycan. N-linked (GlcNAc...) asparagine glycosylation is present at asparagine 1255. A glycan (N-linked (GlcNAc...) asparagine) is linked at asparagine 1351. N-linked (GlcNAc...) asparagine glycosylation is present at asparagine 1530. Asparagine 1624 carries N-linked (GlcNAc...) asparagine glycosylation.

The protein resides in the secreted. This is Extracellular matrix protein A (ecmA) from Dictyostelium discoideum (Social amoeba).